The primary structure comprises 224 residues: Ribose-5-phosphate isomerase A (224 aa).

Substrate-binding positions include 33-36 (TGST), 86-89 (DGAD), and 99-102 (KGGG). Residue Glu-108 is the Proton acceptor of the active site. Lys-126 serves as a coordination point for substrate.

It belongs to the ribose 5-phosphate isomerase family. Homodimer.

It carries out the reaction aldehydo-D-ribose 5-phosphate = D-ribulose 5-phosphate. Its pathway is carbohydrate degradation; pentose phosphate pathway; D-ribose 5-phosphate from D-ribulose 5-phosphate (non-oxidative stage): step 1/1. In terms of biological role, catalyzes the reversible conversion of ribose-5-phosphate to ribulose 5-phosphate. This Bordetella avium (strain 197N) protein is Ribose-5-phosphate isomerase A.